A 632-amino-acid chain; its full sequence is Tail spike protein (632 aa).

Residues 505–630 enclose the Peptidase S74 domain; that stretch reads SDARCKTEPL…KRMQEALAAL (126 aa).

As to quaternary structure, homotrimer. In terms of processing, proteolytic cleavage and release of the chaperone in the host cytosol stabilizes the folded protein. The cleavage gives rise to the mature tail spike protein but is not essential for catalytic activity.

It is found in the virion. Functionally, functions as a receptor binding protein (RBP) and probably mediates the attachment to the host capsular exopolysaccharides. Displays a depolymerase activity that specifically degrades the K5-type polysaccharides of Escherichia coli capsule. In terms of biological role, the C-terminal chaperone protein mediates homotrimerization and proper folding of the catalytic trimer. This Escherichia virus K5 (Bacteriophage K5) protein is Tail spike protein (kflA).